A 457-amino-acid chain; its full sequence is MTSSDSHRSAPSPEHGTASTIEILPVAGLPEFRPGDDLSAALAAAAPWLRDGDVVVVTSKVVSKCEGRLVPAPEDTRGRNELRRKLINDETIRVLARKGRTLIIENGLGLVQAAAGVDGSNVGRGELALLPVNPDASAAVLRIGLRAMLGVNVAVVITDTMGRAWRNGQTDVAIGAAGLAVLHNYSGAVDRYGNELVVTEIAVADEVAAATDLVKGKLTAMPVAVVRGLSPTDDGSTAQHLLRNGPDDLFWLGTTEALELGRQQAQLLRRSVRQFSDEPIAAELIETAVAEALTAPAPHHTRPVRFVWLQTPAVRTRLLDRMADKWRLDLASDALPADAIAQRVARGQILYDAPEVIIPFMVPDGAHAYPDAARASAEHTMFIVAVGAAVQALLVALAVRGLGSCWIGSTIFADDLVRAELELPADWEPLGAIAIGYAHEPTDLREPVRVADLLLRK.

The interval 1–253 is coenzyme F420:L-glutamate ligase; sequence MTSSDSHRSA…NGPDDLFWLG (253 aa). Residues 29-32, Ser-59, and Lys-64 each bind GTP; that span reads LPEF. Asp-118 contacts a divalent metal cation. Asn-121 provides a ligand contact to GTP. 2 residues coordinate a divalent metal cation: Asp-159 and Thr-160. Residues 254 to 457 are dehydro-coenzyme F420-0 reductase; that stretch reads TTEALELGRQ…VRVADLLLRK (204 aa). Residues 269-273 and Ala-297 contribute to the FMN site; that span reads RRSVR. Residue Asp-329 coordinates coenzyme F420-(gamma-Glu)n. Gly-408 and Arg-445 together coordinate FMN.

It in the N-terminal section; belongs to the CofE family. Mg(2+) serves as cofactor. Mn(2+) is required as a cofactor. It depends on K(+) as a cofactor.

It carries out the reaction oxidized coenzyme F420-0 + GTP + L-glutamate = oxidized coenzyme F420-1 + GDP + phosphate + H(+). It catalyses the reaction oxidized coenzyme F420-1 + GTP + L-glutamate = oxidized coenzyme F420-2 + GDP + phosphate + H(+). The catalysed reaction is oxidized coenzyme F420-(gamma-L-Glu)(n) + GTP + L-glutamate = oxidized coenzyme F420-(gamma-L-Glu)(n+1) + GDP + phosphate + H(+). The enzyme catalyses oxidized coenzyme F420-0 + FMN + H(+) = dehydro coenzyme F420-0 + FMNH2. It functions in the pathway cofactor biosynthesis; coenzyme F420 biosynthesis. Its function is as follows. Bifunctional enzyme that catalyzes the GTP-dependent successive addition of multiple gamma-linked L-glutamates to the L-lactyl phosphodiester of 7,8-didemethyl-8-hydroxy-5-deazariboflavin (F420-0) to form polyglutamated F420 derivatives, and the FMNH2-dependent reduction of dehydro-F420-0 to form F420-0. The polypeptide is Bifunctional F420 biosynthesis protein FbiB (Mycobacterium leprae (strain TN)).